Consider the following 301-residue polypeptide: Recombination-associated protein RdgC (301 aa).

It belongs to the RdgC family.

Its subcellular location is the cytoplasm. The protein resides in the nucleoid. May be involved in recombination. This is Recombination-associated protein RdgC from Stenotrophomonas maltophilia (strain R551-3).